The chain runs to 428 residues: Putative F-box protein At3g22421 (428 aa).

One can recognise an F-box domain in the interval 4-50; sequence TTTISHLPTELLDEIISRVPLKSTRAVRLTCKNWDSLFKNRSFMKEE.

This is Putative F-box protein At3g22421 from Arabidopsis thaliana (Mouse-ear cress).